The primary structure comprises 279 residues: Secreted RxLR effector protein 152 (279 aa).

A signal peptide spans 1-22; it reads MRNGSVLFGLFFIGHSCSVLLA. The RxLR-dEER motif lies at 47 to 62; that stretch reads RTLQADDSERTLAEER.

Belongs to the RxLR effector family.

Its subcellular location is the secreted. The protein localises to the host nucleus. Functionally, secreted effector that completely suppresses the host cell death induced by cell death-inducing proteins. The chain is Secreted RxLR effector protein 152 from Plasmopara viticola (Downy mildew of grapevine).